The following is a 200-amino-acid chain: UPF0637 protein LCK_01372 (200 aa).

It belongs to the UPF0637 family.

The chain is UPF0637 protein LCK_01372 from Leuconostoc citreum (strain KM20).